An 88-amino-acid polypeptide reads, in one-letter code: Putative membrane protein insertion efficiency factor (88 aa).

The tract at residues 67–88 (LNAGGYDPVPPKSDNHSKENKK) is disordered. Residues 79–88 (SDNHSKENKK) are compositionally biased toward basic and acidic residues.

This sequence belongs to the UPF0161 family.

The protein resides in the cell inner membrane. Functionally, could be involved in insertion of integral membrane proteins into the membrane. This is Putative membrane protein insertion efficiency factor from Actinobacillus succinogenes (strain ATCC 55618 / DSM 22257 / CCUG 43843 / 130Z).